The following is a 259-amino-acid chain: Ubiquitin-conjugating enzyme E2 J2 (259 aa).

Topologically, residues methionine 1–histidine 226 are cytoplasmic. Residues threonine 12 to glutamate 162 form the UBC core domain. Cysteine 94 (glycyl thioester intermediate) is an active-site residue. The chain crosses the membrane as a helical; Anchor for type IV membrane protein span at residues glycine 227 to tyrosine 247. Residues threonine 248–glutamate 259 lie on the Lumenal side of the membrane.

Belongs to the ubiquitin-conjugating enzyme family. As to quaternary structure, interacts with murid herpesvirus 4 protein K3 (mK3).

Its subcellular location is the endoplasmic reticulum membrane. It catalyses the reaction S-ubiquitinyl-[E1 ubiquitin-activating enzyme]-L-cysteine + [E2 ubiquitin-conjugating enzyme]-L-cysteine = [E1 ubiquitin-activating enzyme]-L-cysteine + S-ubiquitinyl-[E2 ubiquitin-conjugating enzyme]-L-cysteine.. The protein operates within protein modification; protein ubiquitination. Catalyzes the covalent attachment of ubiquitin to other proteins. Seems to function in the selective degradation of misfolded membrane proteins from the endoplasmic reticulum (ERAD). In cooperation with the GATOR2 complex, catalyzes 'Lys-6'-linked ubiquitination of NPRL2. In terms of biological role, in case of infection by the murid herpesvirus 4, its association with the viral E3 ligase K3 mediates ubiquitination of host surface class I (MHC-I) H-2D(b)/H2-D1 and H-2K(b)/H2-K1 molecules before they exit the endoplasmic reticulum, leading to their degradation by the ERAD system, thus blocking the immune detection of virus-infected cells. The complex formed with the murid herpesvirus 4 protein K3 mediates ubiquitination of lysine, as well as serine and threonine residues present in the cytoplasmic tail of surface class I molecules and promotes ubiquitination of hydroxylated serine or threonine residues via ester bonds instead of the classical isopeptide linkage. The chain is Ubiquitin-conjugating enzyme E2 J2 (Ube2j2) from Mus musculus (Mouse).